Here is a 265-residue protein sequence, read N- to C-terminus: Undecaprenyl-diphosphatase (265 aa).

7 consecutive transmembrane segments (helical) span residues 38–58 (SDMFNIVIQAGAILAVTIIYW), 80–100 (LIVAFLITAILGLVVKKLGFE), 107–127 (PIAWALIIGGIWMIFAEWAAA), 135–155 (ITWLVAILVGIAQIVAGVFPG), 178–198 (TEFAFLVGIPTMYAASAYELL), 216–236 (IAFVVSTVVAFIAVKWLLAYI), and 244–264 (FAIYRIILGVLLLGMAATGLI).

Belongs to the UppP family.

Its subcellular location is the cell inner membrane. It carries out the reaction di-trans,octa-cis-undecaprenyl diphosphate + H2O = di-trans,octa-cis-undecaprenyl phosphate + phosphate + H(+). Its function is as follows. Catalyzes the dephosphorylation of undecaprenyl diphosphate (UPP). Confers resistance to bacitracin. The chain is Undecaprenyl-diphosphatase from Rhizobium johnstonii (strain DSM 114642 / LMG 32736 / 3841) (Rhizobium leguminosarum bv. viciae).